Consider the following 102-residue polypeptide: Integration host factor subunit beta (102 aa).

This sequence belongs to the bacterial histone-like protein family. As to quaternary structure, heterodimer of an alpha and a beta chain.

In terms of biological role, this protein is one of the two subunits of integration host factor, a specific DNA-binding protein that functions in genetic recombination as well as in transcriptional and translational control. This is Integration host factor subunit beta from Marinomonas sp. (strain MWYL1).